We begin with the raw amino-acid sequence, 395 residues long: S-adenosylmethionine synthase (395 aa).

Histidine 16 lines the ATP pocket. Aspartate 18 is a binding site for Mg(2+). Glutamate 44 provides a ligand contact to K(+). L-methionine-binding residues include glutamate 57 and glutamine 100. The flexible loop stretch occupies residues 100–110 (QSPDIAQGVDR). ATP-binding positions include 167–169 (DAK), 233–234 (RF), aspartate 242, 248–249 (RK), alanine 265, and lysine 269. Aspartate 242 is an L-methionine binding site. Lysine 273 lines the L-methionine pocket.

It belongs to the AdoMet synthase family. As to quaternary structure, homotetramer; dimer of dimers. Mg(2+) is required as a cofactor. The cofactor is K(+).

Its subcellular location is the cytoplasm. It carries out the reaction L-methionine + ATP + H2O = S-adenosyl-L-methionine + phosphate + diphosphate. The protein operates within amino-acid biosynthesis; S-adenosyl-L-methionine biosynthesis; S-adenosyl-L-methionine from L-methionine: step 1/1. Functionally, catalyzes the formation of S-adenosylmethionine (AdoMet) from methionine and ATP. The overall synthetic reaction is composed of two sequential steps, AdoMet formation and the subsequent tripolyphosphate hydrolysis which occurs prior to release of AdoMet from the enzyme. In Burkholderia mallei (strain NCTC 10247), this protein is S-adenosylmethionine synthase.